Reading from the N-terminus, the 467-residue chain is Asparagine--tRNA ligase (467 aa).

Belongs to the class-II aminoacyl-tRNA synthetase family. Homodimer.

The protein resides in the cytoplasm. The enzyme catalyses tRNA(Asn) + L-asparagine + ATP = L-asparaginyl-tRNA(Asn) + AMP + diphosphate + H(+). This chain is Asparagine--tRNA ligase, found in Haemophilus influenzae (strain PittGG).